The sequence spans 396 residues: Obg-like ATPase 1 (396 aa).

Residues 23 to 283 enclose the OBG-type G domain; it reads LKIGIVGLPN…LSAEERQKYL (261 aa). 32 to 37 lines the ATP pocket; sequence NVGKST. Residues serine 36 and threonine 56 each contribute to the Mg(2+) site. Residue leucine 231 participates in ATP binding. Positions 267–274 match the Nuclear export signal motif; that stretch reads LELRLQEL. Lysine 294 carries the N6-acetyllysine modification. In terms of domain architecture, TGS spans 304-387; that stretch reads QLEYFFTAGP…EDGDIIFFKF (84 aa).

Belongs to the TRAFAC class OBG-HflX-like GTPase superfamily. OBG GTPase family. YchF/OLA1 subfamily. As to quaternary structure, monomer. Mg(2+) serves as cofactor.

Its subcellular location is the cytoplasm. The protein localises to the nucleus. It localises to the nucleolus. Functionally, hydrolyzes ATP, and can also hydrolyze GTP with lower efficiency. Has lower affinity for GTP. This Bos taurus (Bovine) protein is Obg-like ATPase 1.